A 550-amino-acid polypeptide reads, in one-letter code: Chaperonin GroEL (550 aa).

Residues 30–33, lysine 51, 87–91, glycine 415, 479–481, and aspartate 495 each bind ATP; these read TLGP, DGTTT, and NAA.

Belongs to the chaperonin (HSP60) family. Forms a cylinder of 14 subunits composed of two heptameric rings stacked back-to-back. Interacts with the co-chaperonin GroES.

Its subcellular location is the cytoplasm. It carries out the reaction ATP + H2O + a folded polypeptide = ADP + phosphate + an unfolded polypeptide.. Functionally, together with its co-chaperonin GroES, plays an essential role in assisting protein folding. The GroEL-GroES system forms a nano-cage that allows encapsulation of the non-native substrate proteins and provides a physical environment optimized to promote and accelerate protein folding. The protein is Chaperonin GroEL of Marinobacter nauticus (strain ATCC 700491 / DSM 11845 / VT8) (Marinobacter aquaeolei).